The primary structure comprises 306 residues: 26S proteasome regulatory subunit RPN11 (306 aa).

Positions valine 27–glycine 162 constitute an MPN domain. The Zn(2+) site is built by histidine 109, histidine 111, and aspartate 122. Positions histidine 109–aspartate 122 match the JAMM motif motif.

The protein belongs to the peptidase M67A family.

Its function is as follows. Acts as a regulatory subunit of the 26 proteasome which is involved in the ATP-dependent degradation of ubiquitinated proteins. The polypeptide is 26S proteasome regulatory subunit RPN11 (RPN11) (Candida glabrata (strain ATCC 2001 / BCRC 20586 / JCM 3761 / NBRC 0622 / NRRL Y-65 / CBS 138) (Yeast)).